Reading from the N-terminus, the 430-residue chain is MSIIIKVHARQILDSRGNPTIEVDVVTENGVLGRAAVPSGASTGEHEAVELRDGGKAYLGKGVLNAVNNVNTVIAEELVGTSVFEQNTIDQLMIDLDGTPNKSKLGANAILGVSLAAAKAAANELGLPLYRYVGGVSANTLPVPMMNIINGGSHSDAPIAFQEFMIFPVKATSFTHAMQMGTEIFHSLKKVLHDRGLSTAVGDEGGFAPNLAGGTEDALDTIKLAVEKAGYTFGDEIMIALDCAASEFYVDGKYDYTKFEGETGKIRTSAEQADYLAELAAKYPIISIEDGMYEDDWDGWKALTEKIGNKVQLVGDDLFVTNVARLSTGIEKGIANSILVKVNQIGTLTETIAAVNMAKNAGYTSVMSHRSGETEDNTIADLAVALNCGQIKTGSASRSDRMAKYNQLLRIEEELGSTAYFPGLNAFKIK.

A (2R)-2-phosphoglycerate-binding site is contributed by Q162. The active-site Proton donor is the E204. The Mg(2+) site is built by D242, E289, and D316. Residues K341, R370, S371, and K392 each contribute to the (2R)-2-phosphoglycerate site. The Proton acceptor role is filled by K341.

The protein belongs to the enolase family. It depends on Mg(2+) as a cofactor.

The protein localises to the cytoplasm. The protein resides in the secreted. It localises to the cell surface. The enzyme catalyses (2R)-2-phosphoglycerate = phosphoenolpyruvate + H2O. The protein operates within carbohydrate degradation; glycolysis; pyruvate from D-glyceraldehyde 3-phosphate: step 4/5. Functionally, catalyzes the reversible conversion of 2-phosphoglycerate (2-PG) into phosphoenolpyruvate (PEP). It is essential for the degradation of carbohydrates via glycolysis. This Flavobacterium johnsoniae (strain ATCC 17061 / DSM 2064 / JCM 8514 / BCRC 14874 / CCUG 350202 / NBRC 14942 / NCIMB 11054 / UW101) (Cytophaga johnsonae) protein is Enolase.